The primary structure comprises 661 residues: MNPDLRKERAAATFNPELITHILDGSPENTRRRREIENLILNDPDFQHEDYNFLTRSQRYEVAVKKSATMVKKMREFGIADPEEIMWFKKLHMVNFVEPVGLNYSMFIPTLLNQGTTAQQEKWMHPSQELQIIGTYAQTEMGHGTHLRGLETTATYDPKTQEFILNSPTVTSIKWWPGGLGKTSNHAIVLAQLITRGECYGLHAFVVPIREIGTHKPLPGITVGDIGPKFGYEEMDNGYLKMDNYRIPRENMLMKYAQVKPDGTYVKPLSNKLTYGTMVFVRSFLVGSAAQSLSKACTIAIRYSAVRRQSEIKRSEPEPQILDFQTQQYKLFPLLATAYAFHFLGRYIKETYMRINESIGQGDLSELPELHALTAGLKAFTTWTANAGIEECRMACGGHGYSHSSGIPNIYVTFTPACTFEGENTVMMLQTARFLMKIYDQVQSGKLVGGMVSYLNDLPSQRIQPQQVAVWPTLVDINSLDSLTEAYKLRAARLVEIAAKNLQAQVSHRKSKEVAWNLTSVDLVRASEAHCHYVTVKVFADKLPKIQDRAVQAVLRNLCLLYSLYGISQKGGDFLEGNIITGAQMSQVNSRILELLTVTRPNAVALVDAFDFKDVTLGSVLGRYDGNVYENLFEWAKKSPLNKTEVHESYYKHLKPLQSKL.

Ser26 carries the phosphoserine modification. Lys65 carries the post-translational modification N6-acetyllysine. N6-succinyllysine occurs at positions 89 and 90. An FAD-binding site is contributed by Thr139. N6-succinyllysine is present on Lys159. Gly178 contacts FAD. Lys216 is modified (N6-acetyllysine). The residue at position 241 (Lys241) is an N6-succinyllysine. Lys255, Lys267, and Lys272 each carry N6-acetyllysine. Lys349 bears the N6-succinyllysine mark. Glu421 acts as the Proton acceptor in catalysis. N6-acetyllysine; alternate is present on residues Lys437 and Lys446. An N6-succinyllysine; alternate mark is found at Lys437 and Lys446. Lys500 carries the N6-acetyllysine modification. Position 512 is an N6-acetyllysine; alternate (Lys512). At Lys512 the chain carries N6-succinyllysine; alternate. The residue at position 542 (Lys542) is an N6-succinyllysine. Lys637 carries the post-translational modification N6-acetyllysine; alternate. An N6-succinyllysine; alternate modification is found at Lys637. Lys643 is modified (N6-succinyllysine). Residue Ser649 is modified to Phosphoserine. At Lys652 the chain carries N6-acetyllysine. Lys655 carries the post-translational modification N6-succinyllysine. Residues 659 to 661 carry the Microbody targeting signal motif; the sequence is SKL.

It belongs to the acyl-CoA oxidase family. Homodimer. Interacts with LONP2. FAD serves as cofactor. In terms of tissue distribution, highest levels of isoform 1 are found in liver and kidney while highest levels of isoform 2 are found in white adipose tissue. Isoform 1 is expressed at higher levels than isoform 2 in liver and kidney while isoform 2 is expressed at higher levels in brain, heart, lung, muscle, white adipose tissue and testis.

The protein localises to the peroxisome. It catalyses the reaction a 2,3-saturated acyl-CoA + O2 = a (2E)-enoyl-CoA + H2O2. The catalysed reaction is hexadecanoyl-CoA + O2 = (2E)-hexadecenoyl-CoA + H2O2. It carries out the reaction dodecanoyl-CoA + O2 = (2E)-dodecenoyl-CoA + H2O2. The enzyme catalyses octanoyl-CoA + O2 = (2E)-octenoyl-CoA + H2O2. It catalyses the reaction decanoyl-CoA + O2 = (2E)-decenoyl-CoA + H2O2. The catalysed reaction is tetradecanoyl-CoA + O2 = (2E)-tetradecenoyl-CoA + H2O2. It carries out the reaction hexadecanedioyl-CoA + O2 = (2E)-hexadecenedioyl-CoA + H2O2. The enzyme catalyses tetracosanoyl-CoA + O2 = (2E)-tetracosenoyl-CoA + H2O2. It catalyses the reaction glutaryl-CoA + O2 = (2E)-glutaconyl-CoA + H2O2. The catalysed reaction is hexanoyl-CoA + O2 = (2E)-hexenoyl-CoA + H2O2. It carries out the reaction octadecanoyl-CoA + O2 = (2E)-octadecenoyl-CoA + H2O2. The enzyme catalyses (5Z,8Z,11Z,14Z,17Z)-eicosapentaenoyl-CoA + O2 = (2E,5Z,8Z,11Z,14Z,17Z)-icosahexaenoyl-CoA + H2O2. It catalyses the reaction (6Z,9Z,12Z,15Z,18Z,21Z)-tetracosahexaenoyl-CoA + O2 = (2E,6Z,9Z,12Z,15Z,18Z,21Z)-tetracosaheptaenoyl-CoA + H2O2. The protein operates within lipid metabolism; peroxisomal fatty acid beta-oxidation. Involved in the initial and rate-limiting step of peroxisomal beta-oxidation of straight-chain saturated and unsaturated very-long-chain fatty acids. Catalyzes the desaturation of fatty acyl-CoAs such as palmitoyl-CoA (hexadecanoyl-CoA) to 2-trans-enoyl-CoAs ((2E)-enoyl-CoAs) such as (2E)-hexadecenoyl-CoA, and donates electrons directly to molecular oxygen (O(2)), thereby producing hydrogen peroxide (H(2)O(2)). Functionally, shows highest activity against medium-chain fatty acyl-CoAs. Shows optimum activity with a chain length of 10 carbons (decanoyl-CoA) in vitro. Its function is as follows. Is active against a much broader range of substrates and shows activity towards long-chain acyl-CoAs. The protein is Peroxisomal acyl-coenzyme A oxidase 1 of Mus musculus (Mouse).